A 930-amino-acid chain; its full sequence is Protocadherin gamma-B6 (930 aa).

A signal peptide spans 1-30; sequence MGGSCAQRRRAGPRQVLFPLLLPLFYPTLS. Cadherin domains lie at 31–133, 134–242, 243–347, 348–452, 453–562, and 570–675; these read EPIR…APQF, DKKE…PPVF, SRDE…SPEI, IITS…APVF, DQTS…APRV, and DGSA…LPDL. Residues 31 to 691 are Extracellular-facing; sequence EPIRYSIPEE…SDPQAELQFY (661 aa). 3 N-linked (GlcNAc...) asparagine glycosylation sites follow: asparagine 304, asparagine 419, and asparagine 545. The helical transmembrane segment at 692-712 threads the bilayer; sequence LVVALALISVLFLLAVILAIA. Topologically, residues 713 to 930 are cytoplasmic; the sequence is LRLRRSLSPA…KKKSGKKEKK (218 aa). Disordered regions lie at residues 791–839 and 900–930; these read PHGG…WPNN and ATLTNAAGKRDGKAPAGGNGNKKKSGKKEKK. The segment covering 800–839 has biased composition (polar residues); the sequence is HPETLTSQAPPNTDWRFSQAQRPGTSGSQNGDDTGTWPNN. Over residues 920 to 930 the composition is skewed to basic residues; it reads NKKKSGKKEKK.

It is found in the cell membrane. Functionally, potential calcium-dependent cell-adhesion protein. May be involved in the establishment and maintenance of specific neuronal connections in the brain. This Homo sapiens (Human) protein is Protocadherin gamma-B6 (PCDHGB6).